Here is a 322-residue protein sequence, read N- to C-terminus: MVHSKSLRIAFFGTTSFAAWHLHTLAHLSTHQIIAVFTQEIQISTCKSFLSLHKIAKKYNISLFQSRTLSISDIIYIIKKINVDLIVVVSYGLILPQEILNIPRLGCINVHGSLLPRWRGPAPIQRALEYGDSITGITIIQMDLGIDTGDILHIMPCKIFPKDTSCTLSNRLVNIGSAMLSQVLDQFILGTFTLIPQDSTYATYAHKLNKQEARINWNLSAIQLERCIRAFNPWPISFFQIKNDRIRVWDAEVSNQNINNYSSSTSILPGTILAAHPNGIYVVTGSGILILTMLQISGKKITSVRDLLNAYKEWFKPNSVLE.

113–116 (SLLP) contributes to the (6S)-5,6,7,8-tetrahydrofolate binding site.

Belongs to the Fmt family.

The enzyme catalyses L-methionyl-tRNA(fMet) + (6R)-10-formyltetrahydrofolate = N-formyl-L-methionyl-tRNA(fMet) + (6S)-5,6,7,8-tetrahydrofolate + H(+). Functionally, attaches a formyl group to the free amino group of methionyl-tRNA(fMet). The formyl group appears to play a dual role in the initiator identity of N-formylmethionyl-tRNA by promoting its recognition by IF2 and preventing the misappropriation of this tRNA by the elongation apparatus. This chain is Methionyl-tRNA formyltransferase, found in Blochmanniella pennsylvanica (strain BPEN).